The following is a 153-amino-acid chain: LOB domain-containing protein 26 (153 aa).

The LOB domain occupies 4-105 (NPCEVCRFQN…EEVSKTKKLL (102 aa)). The disordered stretch occupies residues 126 to 153 (KSKPSVLRKRKRKTKSSDESAIRVVEDS). Residues 140 to 153 (KSSDESAIRVVEDS) are compositionally biased toward basic and acidic residues.

The protein belongs to the LOB domain-containing protein family.

This is LOB domain-containing protein 26 (LBD26) from Arabidopsis thaliana (Mouse-ear cress).